The following is a 480-amino-acid chain: uncharacterized protein (480 aa).

Lysine 222 bears the N6-(pyridoxal phosphate)lysine mark.

The protein belongs to the Orn/Lys/Arg decarboxylase class-I family. Pyridoxal 5'-phosphate serves as cofactor.

This is an uncharacterized protein from Bacillus subtilis (strain 168).